Here is a 444-residue protein sequence, read N- to C-terminus: Tubulin beta-8 chain (444 aa).

The MREI motif motif lies at 1 to 4 (MREI). The GTP site is built by Gln-11, Glu-69, Ser-138, Gly-142, Thr-143, and Gly-144. Glu-69 serves as a coordination point for Mg(2+). At Ser-172 the chain carries Phosphoserine; by CDK1. Residues Asn-204 and Asn-226 each contribute to the GTP site. Glu-436 is subject to 5-glutamyl polyglutamate.

Belongs to the tubulin family. As to quaternary structure, dimer of alpha and beta chains. A typical microtubule is a hollow water-filled tube with an outer diameter of 25 nm and an inner diameter of 15 nM. Alpha-beta heterodimers associate head-to-tail to form protofilaments running lengthwise along the microtubule wall with the beta-tubulin subunit facing the microtubule plus end conferring a structural polarity. Microtubules usually have 13 protofilaments but different protofilament numbers can be found in some organisms and specialized cells. Mg(2+) is required as a cofactor. Post-translationally, some glutamate residues at the C-terminus are polyglycylated, resulting in polyglycine chains on the gamma-carboxyl group. Glycylation is mainly limited to tubulin incorporated into axonemes (cilia and flagella) whereas glutamylation is prevalent in neuronal cells, centrioles, axonemes, and the mitotic spindle. Both modifications can coexist on the same protein on adjacent residues, and lowering polyglycylation levels increases polyglutamylation, and reciprocally. Cilia and flagella glycylation is required for their stability and maintenance. Flagella glycylation controls sperm motility. In terms of processing, some glutamate residues at the C-terminus are polyglutamylated, resulting in polyglutamate chains on the gamma-carboxyl group. Polyglutamylation plays a key role in microtubule severing by spastin (SPAST). SPAST preferentially recognizes and acts on microtubules decorated with short polyglutamate tails: severing activity by SPAST increases as the number of glutamates per tubulin rises from one to eight, but decreases beyond this glutamylation threshold. Glutamylation is also involved in cilia motility. Phosphorylated on Ser-172 by CDK1 during the cell cycle, from metaphase to telophase, but not in interphase. This phosphorylation inhibits tubulin incorporation into microtubules.

The protein localises to the cytoplasm. It localises to the cytoskeleton. It is found in the spindle. Its function is as follows. Tubulin is the major constituent of microtubules, a cylinder consisting of laterally associated linear protofilaments composed of alpha- and beta-tubulin heterodimers. Microtubules grow by the addition of GTP-tubulin dimers to the microtubule end, where a stabilizing cap forms. Below the cap, tubulin dimers are in GDP-bound state, owing to GTPase activity of alpha-tubulin. Has a key role in meiotic spindle assembly and oocyte maturation. This is Tubulin beta-8 chain (TUBB8) from Papio hamadryas (Hamadryas baboon).